Reading from the N-terminus, the 446-residue chain is Tubulin beta-4 chain (446 aa).

GTP is bound by residues glutamine 11, glutamate 69, serine 138, glycine 142, threonine 143, glycine 144, asparagine 204, and asparagine 226. Glutamate 69 provides a ligand contact to Mg(2+). The span at 417–426 shows a compositional bias: polar residues; the sequence is DLVSEYQQYQ. The segment at 417 to 446 is disordered; the sequence is DLVSEYQQYQDATADEEGDYEDEDEALHDE. Residues 429–446 are compositionally biased toward acidic residues; it reads TADEEGDYEDEDEALHDE.

The protein belongs to the tubulin family. In terms of assembly, dimer of alpha and beta chains. A typical microtubule is a hollow water-filled tube with an outer diameter of 25 nm and an inner diameter of 15 nM. Alpha-beta heterodimers associate head-to-tail to form protofilaments running lengthwise along the microtubule wall with the beta-tubulin subunit facing the microtubule plus end conferring a structural polarity. Microtubules usually have 13 protofilaments but different protofilament numbers can be found in some organisms and specialized cells. Requires Mg(2+) as cofactor.

The protein resides in the cytoplasm. It is found in the cytoskeleton. Functionally, tubulin is the major constituent of microtubules, a cylinder consisting of laterally associated linear protofilaments composed of alpha- and beta-tubulin heterodimers. Microtubules grow by the addition of GTP-tubulin dimers to the microtubule end, where a stabilizing cap forms. Below the cap, tubulin dimers are in GDP-bound state, owing to GTPase activity of alpha-tubulin. The chain is Tubulin beta-4 chain (TUBB4) from Eleusine indica (Goosegrass).